Consider the following 336-residue polypeptide: CENP-A histone chaperone scm3 (336 aa).

Positions 243 to 269 (RRRNPLLSSPKTPLRRSFSKSKVRNSN) are disordered. Residues 255 to 269 (PLRRSFSKSKVRNSN) show a composition bias toward basic residues.

The protein localises to the cytoplasm. Its subcellular location is the nucleus. Centromeric protein that plays a central role in the incorporation and maintenance of histone H3-like variant CENPA at centromeres. The sequence is that of CENP-A histone chaperone scm3 from Schizosaccharomyces pombe (strain 972 / ATCC 24843) (Fission yeast).